A 621-amino-acid chain; its full sequence is tRNA uridine 5-carboxymethylaminomethyl modification enzyme MnmG (621 aa).

9-14 contributes to the FAD binding site; that stretch reads GGGHAG. 268–282 contacts NAD(+); the sequence is GPRYCPSIEDKINRF.

It belongs to the MnmG family. As to quaternary structure, homodimer. Heterotetramer of two MnmE and two MnmG subunits. FAD is required as a cofactor.

It localises to the cytoplasm. NAD-binding protein involved in the addition of a carboxymethylaminomethyl (cmnm) group at the wobble position (U34) of certain tRNAs, forming tRNA-cmnm(5)s(2)U34. This is tRNA uridine 5-carboxymethylaminomethyl modification enzyme MnmG from Campylobacter fetus subsp. fetus (strain 82-40).